A 116-amino-acid polypeptide reads, in one-letter code: MYELINNFEKKQMKKNIPHLHPGDTVEVKTWVIEGSKKRLQIFEGVVISIKNRGLHSAFTVRKISSGEGVERVFQSHSPVIEEIKIKRFGIVRRAKLYYLRSLSGKSARIKVRMNP.

The protein belongs to the bacterial ribosomal protein bL19 family.

Its function is as follows. This protein is located at the 30S-50S ribosomal subunit interface and may play a role in the structure and function of the aminoacyl-tRNA binding site. In Blochmanniella pennsylvanica (strain BPEN), this protein is Large ribosomal subunit protein bL19.